Consider the following 121-residue polypeptide: Small ribosomal subunit protein uS13 (121 aa).

Residues 92 to 121 (RKGLPVRGQSSKTNARTVKGPRKTVANKKK) are disordered. The segment covering 110–121 (KGPRKTVANKKK) has biased composition (basic residues).

This sequence belongs to the universal ribosomal protein uS13 family. As to quaternary structure, part of the 30S ribosomal subunit. Forms a loose heterodimer with protein S19. Forms two bridges to the 50S subunit in the 70S ribosome.

Its function is as follows. Located at the top of the head of the 30S subunit, it contacts several helices of the 16S rRNA. In the 70S ribosome it contacts the 23S rRNA (bridge B1a) and protein L5 of the 50S subunit (bridge B1b), connecting the 2 subunits; these bridges are implicated in subunit movement. Contacts the tRNAs in the A and P-sites. In Mycoplasma mycoides subsp. mycoides SC (strain CCUG 32753 / NCTC 10114 / PG1), this protein is Small ribosomal subunit protein uS13.